The primary structure comprises 367 residues: Nociceptin receptor (367 aa).

Topologically, residues 1–45 are extracellular; it reads MESLFPAPFWEVLYGSHFQGNLSLLNETVPHHLLLNASHSAFLPL. Residues asparagine 21, asparagine 26, and asparagine 36 are each glycosylated (N-linked (GlcNAc...) asparagine). Residues 46-71 traverse the membrane as a helical segment; the sequence is GLKVTIVGLYLAVCIGGLLGNCLVMY. Topologically, residues 72–84 are cytoplasmic; it reads VILRHTKMKTATN. The helical transmembrane segment at 85 to 106 threads the bilayer; the sequence is IYIFNLALADTLVLLTLPFQGT. The Extracellular portion of the chain corresponds to 107–121; the sequence is DILLGFWPFGNALCK. A disulfide bond links cysteine 120 and cysteine 197. Residues 122 to 143 traverse the membrane as a helical segment; sequence TVIAIDYYNMFTSTFTLTAMSV. At 144–162 the chain is on the cytoplasmic side; sequence DRYVAICHPIRALDVRTSS. A helical transmembrane segment spans residues 163–185; the sequence is KAQAVNVAIWALASVVGVPVAIM. Over 186 to 208 the chain is Extracellular; sequence GSAQVEDEEIECLVEIPAPQDYW. Residues 209-233 form a helical membrane-spanning segment; the sequence is GPVFAICIFLFSFIIPVLIISVCYS. At 234 to 261 the chain is on the cytoplasmic side; sequence LMIRRLRGVRLLSGSREKDRNLRRITRL. The chain crosses the membrane as a helical span at residues 262–282; it reads VLVVVAVFVGCWTPVQVFVLV. Topologically, residues 283-297 are extracellular; sequence QGLGVQPGSETAVAI. A helical transmembrane segment spans residues 298–319; the sequence is LRFCTALGYVNSCLNPILYAFL. At 320-367 the chain is on the cytoplasmic side; the sequence is DENFKACFRKFCCASALHREMQVSDRVRSIAKDVGLGCKTSETVPRPA. Cysteine 331 is lipidated: S-palmitoyl cysteine.

It belongs to the G-protein coupled receptor 1 family. In terms of processing, phosphorylation at Ser-360 requires GRK3. In terms of tissue distribution, in the brain, isoform KOR3 and isoform KOR3C are most abundant in hypothalamus and periaqueductal gray. Isoform KOR3A is highly expressed in cortex, striatum and brainstem. Isoform KOR3D is highly expressed in cerebellum, hypothalamus and brainstem. Detected in spleen lymphocytes.

Its subcellular location is the cell membrane. The protein resides in the cytoplasmic vesicle. In terms of biological role, G-protein coupled opioid receptor that functions as a receptor for the endogenous neuropeptide nociceptin. Ligand binding causes a conformation change that triggers signaling via guanine nucleotide-binding proteins (G proteins) and modulates the activity of down-stream effectors. Signaling via G proteins mediates inhibition of adenylate cyclase activity and calcium channel activity. Arrestins modulate signaling via G proteins and mediate the activation of alternative signaling pathways that lead to the activation of MAP kinases. Plays a role in modulating nociception and the perception of pain. Plays a role in the regulation of locomotor activity by the neuropeptide nociceptin. This Mus musculus (Mouse) protein is Nociceptin receptor (Oprl1).